Consider the following 248-residue polypeptide: UPF0736 protein ABC2536 (248 aa).

This sequence belongs to the UPF0736 family.

In Shouchella clausii (strain KSM-K16) (Alkalihalobacillus clausii), this protein is UPF0736 protein ABC2536.